We begin with the raw amino-acid sequence, 466 residues long: Ribulose bisphosphate carboxylase large chain (466 aa).

Lysine 5 bears the N6,N6,N6-trimethyllysine mark. 2 residues coordinate substrate: asparagine 114 and threonine 164. The active-site Proton acceptor is lysine 166. Lysine 168 is a substrate binding site. Lysine 192, aspartate 194, and glutamate 195 together coordinate Mg(2+). Lysine 192 bears the N6-carboxylysine mark. Catalysis depends on histidine 285, which acts as the Proton acceptor. Substrate contacts are provided by arginine 286, histidine 318, and serine 370.

It belongs to the RuBisCO large chain family. Type I subfamily. As to quaternary structure, heterohexadecamer of 8 large chains and 8 small chains; disulfide-linked. The disulfide link is formed within the large subunit homodimers. Mg(2+) is required as a cofactor. The disulfide bond which can form in the large chain dimeric partners within the hexadecamer appears to be associated with oxidative stress and protein turnover.

Its subcellular location is the plastid. The protein resides in the chloroplast. The enzyme catalyses 2 (2R)-3-phosphoglycerate + 2 H(+) = D-ribulose 1,5-bisphosphate + CO2 + H2O. The catalysed reaction is D-ribulose 1,5-bisphosphate + O2 = 2-phosphoglycolate + (2R)-3-phosphoglycerate + 2 H(+). In terms of biological role, ruBisCO catalyzes two reactions: the carboxylation of D-ribulose 1,5-bisphosphate, the primary event in carbon dioxide fixation, as well as the oxidative fragmentation of the pentose substrate in the photorespiration process. Both reactions occur simultaneously and in competition at the same active site. The polypeptide is Ribulose bisphosphate carboxylase large chain (Asarum canadense (Wild ginger)).